The chain runs to 88 residues: Sec-independent protein translocase protein TatA (88 aa).

A helical membrane pass occupies residues 1–21 (MGGASIWHWIVVGVIVMLLFG). The disordered stretch occupies residues 62–88 (TEPVRTLPPHPTEPAPATHATVDRKVV).

Belongs to the TatA/E family. As to quaternary structure, the Tat system comprises two distinct complexes: a TatABC complex, containing multiple copies of TatA, TatB and TatC subunits, and a separate TatA complex, containing only TatA subunits. Substrates initially bind to the TatABC complex, which probably triggers association of the separate TatA complex to form the active translocon.

It is found in the cell inner membrane. In terms of biological role, part of the twin-arginine translocation (Tat) system that transports large folded proteins containing a characteristic twin-arginine motif in their signal peptide across membranes. TatA could form the protein-conducting channel of the Tat system. The polypeptide is Sec-independent protein translocase protein TatA (Methylobacterium sp. (strain 4-46)).